A 472-amino-acid polypeptide reads, in one-letter code: Glutamate--tRNA ligase (472 aa).

Positions 9 to 19 (PSPTGYLHVGG) match the 'HIGH' region motif. Residues Cys-98, Cys-100, Cys-125, and His-127 each coordinate Zn(2+). The 'KMSKS' region motif lies at 237 to 241 (KLSKR). Residue Lys-240 participates in ATP binding.

Belongs to the class-I aminoacyl-tRNA synthetase family. Glutamate--tRNA ligase type 1 subfamily. Monomer. Zn(2+) serves as cofactor.

It is found in the cytoplasm. It carries out the reaction tRNA(Glu) + L-glutamate + ATP = L-glutamyl-tRNA(Glu) + AMP + diphosphate. Catalyzes the attachment of glutamate to tRNA(Glu) in a two-step reaction: glutamate is first activated by ATP to form Glu-AMP and then transferred to the acceptor end of tRNA(Glu). The polypeptide is Glutamate--tRNA ligase (Klebsiella pneumoniae (strain 342)).